Consider the following 146-residue polypeptide: UPF0735 ACT domain-containing protein Cbei_1295 (146 aa).

Residues T70–M145 form the ACT domain.

Belongs to the UPF0735 family.

In Clostridium beijerinckii (strain ATCC 51743 / NCIMB 8052) (Clostridium acetobutylicum), this protein is UPF0735 ACT domain-containing protein Cbei_1295.